The sequence spans 395 residues: Pyridinium-3,5-bisthiocarboxylic acid mononucleotide nickel insertion protein (395 aa).

Belongs to the LarC family.

The catalysed reaction is Ni(II)-pyridinium-3,5-bisthiocarboxylate mononucleotide = pyridinium-3,5-bisthiocarboxylate mononucleotide + Ni(2+). Its function is as follows. Involved in the biosynthesis of a nickel-pincer cofactor ((SCS)Ni(II) pincer complex). Binds Ni(2+), and functions in nickel delivery to pyridinium-3,5-bisthiocarboxylic acid mononucleotide (P2TMN), to form the mature cofactor. Is thus probably required for the activation of nickel-pincer cofactor-dependent enzymes. The protein is Pyridinium-3,5-bisthiocarboxylic acid mononucleotide nickel insertion protein of Staphylococcus epidermidis (strain ATCC 35984 / DSM 28319 / BCRC 17069 / CCUG 31568 / BM 3577 / RP62A).